The primary structure comprises 459 residues: Lipase 4 (459 aa).

The first 14 residues, 1-14 (MLFLLFLLVAPIYA), serve as a signal peptide directing secretion. Cysteine 110 and cysteine 281 are joined by a disulfide. Serine 194 (charge relay system) is an active-site residue. Asparagine 229 and asparagine 266 each carry an N-linked (GlcNAc...) asparagine glycan. Catalysis depends on charge relay system residues aspartate 343 and histidine 376. A disulfide bridge connects residues cysteine 359 and cysteine 404.

Belongs to the AB hydrolase superfamily. Lipase family. Class Lip subfamily.

The protein localises to the secreted. It catalyses the reaction a triacylglycerol + H2O = a diacylglycerol + a fatty acid + H(+). Functionally, secreted lipase that is able to hydrolyze both the neutral triacylglycerols and the monopalmitate ester Tween 40, allowing the use of hydrolyzed products as carbon sources. Has broad lipolytic activity, which may be important for colonization and subsequent infection, therefore contributing to the persistence and virulence in human tissue. The chain is Lipase 4 from Candida albicans (strain SC5314 / ATCC MYA-2876) (Yeast).